Here is a 214-residue protein sequence, read N- to C-terminus: MIKAVLFDLDGTLINTNDLILKSFKHTFKTMLDLEPSEEEITMNYGRPLQEIFKSYDENRIEEMINCYRKINLELHDDECKEFADVDLMLKTLKSKGIKIGVVTSKKSDMAERGAKLMGIFKYFDTFITPEITTKHKPDGEPVLKACENLGVSPSEALMVGDSPYDILAGKNAGAKTCGVKYTALPLEKLGESNPDFYVDKPLEILDLVEKLNS.

The active-site Nucleophile is Asp-8.

The protein belongs to the HAD-like hydrolase superfamily. PpaX family. The cofactor is Mg(2+).

It catalyses the reaction diphosphate + H2O = 2 phosphate + H(+). The chain is Putative pyrophosphatase PpaX from Clostridium perfringens (strain 13 / Type A).